A 365-amino-acid polypeptide reads, in one-letter code: tRNA/tmRNA (uracil-C(5))-methyltransferase (365 aa).

Gln-189, Tyr-217, Asn-222, Glu-238, and Asp-298 together coordinate S-adenosyl-L-methionine. The active-site Nucleophile is the Cys-323. The active-site Proton acceptor is Glu-357.

Belongs to the class I-like SAM-binding methyltransferase superfamily. RNA M5U methyltransferase family. TrmA subfamily.

It carries out the reaction uridine(54) in tRNA + S-adenosyl-L-methionine = 5-methyluridine(54) in tRNA + S-adenosyl-L-homocysteine + H(+). The enzyme catalyses uridine(341) in tmRNA + S-adenosyl-L-methionine = 5-methyluridine(341) in tmRNA + S-adenosyl-L-homocysteine + H(+). Dual-specificity methyltransferase that catalyzes the formation of 5-methyluridine at position 54 (m5U54) in all tRNAs, and that of position 341 (m5U341) in tmRNA (transfer-mRNA). In Pseudoalteromonas atlantica (strain T6c / ATCC BAA-1087), this protein is tRNA/tmRNA (uracil-C(5))-methyltransferase.